A 130-amino-acid polypeptide reads, in one-letter code: 3-aminoacrylate deaminase RutC (130 aa).

This sequence belongs to the RutC family.

The catalysed reaction is (Z)-3-aminoacrylate + H2O + H(+) = 3-oxopropanoate + NH4(+). Its function is as follows. Involved in pyrimidine catabolism. Catalyzes the deamination of 3-aminoacrylate to malonic semialdehyde, a reaction that can also occur spontaneously. RutC may facilitate the reaction and modulate the metabolic fitness, rather than catalyzing essential functions. The protein is 3-aminoacrylate deaminase RutC of Methylorubrum extorquens (strain CM4 / NCIMB 13688) (Methylobacterium extorquens).